A 418-amino-acid polypeptide reads, in one-letter code: Queuine tRNA-ribosyltransferase accessory subunit 2 (418 aa).

Zn(2+) contacts are provided by C325, C327, C330, and H356.

The protein belongs to the queuine tRNA-ribosyltransferase family. QTRT2 subfamily. In terms of assembly, heterodimer of a catalytic subunit and an accessory subunit. Zn(2+) is required as a cofactor.

Its subcellular location is the cytoplasm. Non-catalytic subunit of the queuine tRNA-ribosyltransferase (TGT) that catalyzes the base-exchange of a guanine (G) residue with queuine (Q) at position 34 (anticodon wobble position) in tRNAs with GU(N) anticodons (tRNA-Asp, -Asn, -His and -Tyr), resulting in the hypermodified nucleoside queuosine (7-(((4,5-cis-dihydroxy-2-cyclopenten-1-yl)amino)methyl)-7-deazaguanosine). The polypeptide is Queuine tRNA-ribosyltransferase accessory subunit 2 (Drosophila erecta (Fruit fly)).